The following is a 369-amino-acid chain: GTPase Obg (369 aa).

Positions 1-158 (MFTDVVELTV…RRIKLDLKLI (158 aa)) constitute an Obg domain. The interval 126–146 (NTHFKSSTNQRPTYAQPGEKG) is disordered. Residues 128–138 (HFKSSTNQRPT) are compositionally biased toward polar residues. The region spanning 159–362 (ADVGLVGFPN…LKHALFNLVQ (204 aa)) is the OBG-type G domain. GTP is bound by residues 165–172 (GFPNVGKS), 190–194 (FTTLT), 212–215 (DIPG), 280–283 (TRAD), and 343–345 (SSA). Positions 172 and 192 each coordinate Mg(2+).

Belongs to the TRAFAC class OBG-HflX-like GTPase superfamily. OBG GTPase family. In terms of assembly, monomer. The cofactor is Mg(2+).

The protein resides in the cytoplasm. An essential GTPase which binds GTP, GDP and possibly (p)ppGpp with moderate affinity, with high nucleotide exchange rates and a fairly low GTP hydrolysis rate. Plays a role in control of the cell cycle, stress response, ribosome biogenesis and in those bacteria that undergo differentiation, in morphogenesis control. The protein is GTPase Obg of Sulfurimonas denitrificans (strain ATCC 33889 / DSM 1251) (Thiomicrospira denitrificans (strain ATCC 33889 / DSM 1251)).